Consider the following 612-residue polypeptide: Glycosyltransferase 25 family member (612 aa).

The first 20 residues, 1–20 (MNKQVIFGLLLACILVCISG), serve as a signal peptide directing secretion. Residues N106, N227, N263, and N524 are each glycosylated (N-linked (GlcNAc...) asparagine). Positions 609–612 (HQEL) match the Prevents secretion from ER motif.

This sequence belongs to the glycosyltransferase 25 family.

It localises to the endoplasmic reticulum lumen. The polypeptide is Glycosyltransferase 25 family member (Drosophila melanogaster (Fruit fly)).